The following is a 243-amino-acid chain: Small ribosomal subunit protein eS4 (243 aa).

The region spanning 43–105 (IPLLYIVRDY…TGEHYRVLPN (63 aa)) is the S4 RNA-binding domain.

The protein belongs to the eukaryotic ribosomal protein eS4 family.

This chain is Small ribosomal subunit protein eS4 (rps4e), found in Pyrococcus horikoshii (strain ATCC 700860 / DSM 12428 / JCM 9974 / NBRC 100139 / OT-3).